Here is a 412-residue protein sequence, read N- to C-terminus: MREMYPKKGRVILHVDMNCFFASVEIAHDSSLQGKPLAVAGNEKERKGIIITCSYEAREYGIRTTMPLWEAKRLCPQLIVRRPNFTLYREASFQMFQILSRFTEKIQPVSIDEGYLDITDCYALGSPLEIAKMIQQALLTELQLPCSIGIAPNLFLAKTASDMKKPLGITVLRKRDIPEMIWPLPVGAMHGIGEKTAEKLNDIHIQTIEQLAKGNEHIIRAKIGKHGVDLQRRAKGMDDREVDPSQMGQHKSVGNSMTFSKDMDEEKELLDMLQRLSKSVSKRLQKRTLVSYNIQIMIKYHDRRTVTRSKQLKNAIWEERDIFQAASRLWKQHWDGDSVRLLGVTATEIEWKTESVKQLDLFSFEEDAKEEPLLAVIDQINDKYGMPLLQRGSQLLRKQEKSFQQKLESKFM.

One can recognise a UmuC domain in the interval 12–193; the sequence is ILHVDMNCFF…LPVGAMHGIG (182 aa). Aspartate 16 and aspartate 112 together coordinate Mg(2+). Residue glutamate 113 is part of the active site. The interval 235–257 is disordered; the sequence is KGMDDREVDPSQMGQHKSVGNSM. A compositionally biased stretch (polar residues) spans 246 to 257; it reads QMGQHKSVGNSM.

The protein belongs to the DNA polymerase type-Y family. Monomer. It depends on Mg(2+) as a cofactor.

Its subcellular location is the cytoplasm. It catalyses the reaction DNA(n) + a 2'-deoxyribonucleoside 5'-triphosphate = DNA(n+1) + diphosphate. Functionally, poorly processive, error-prone DNA polymerase involved in untargeted mutagenesis. Copies undamaged DNA at stalled replication forks, which arise in vivo from mismatched or misaligned primer ends. These misaligned primers can be extended by PolIV. Exhibits no 3'-5' exonuclease (proofreading) activity. May be involved in translesional synthesis, in conjunction with the beta clamp from PolIII. This chain is DNA polymerase IV, found in Bacillus anthracis.